A 70-amino-acid chain; its full sequence is ATP synthase subunit c (70 aa).

2 helical membrane-spanning segments follow: residues 4–24 (IAAAIAIGLSALGAGIGNGLI) and 47–67 (FIGIGLVEALPILGLVISFIV).

It belongs to the ATPase C chain family. As to quaternary structure, F-type ATPases have 2 components, F(1) - the catalytic core - and F(0) - the membrane proton channel. F(1) has five subunits: alpha(3), beta(3), gamma(1), delta(1), epsilon(1). F(0) has three main subunits: a(1), b(2) and c(10-14). The alpha and beta chains form an alternating ring which encloses part of the gamma chain. F(1) is attached to F(0) by a central stalk formed by the gamma and epsilon chains, while a peripheral stalk is formed by the delta and b chains.

It localises to the cell membrane. In terms of biological role, f(1)F(0) ATP synthase produces ATP from ADP in the presence of a proton or sodium gradient. F-type ATPases consist of two structural domains, F(1) containing the extramembraneous catalytic core and F(0) containing the membrane proton channel, linked together by a central stalk and a peripheral stalk. During catalysis, ATP synthesis in the catalytic domain of F(1) is coupled via a rotary mechanism of the central stalk subunits to proton translocation. Its function is as follows. Key component of the F(0) channel; it plays a direct role in translocation across the membrane. A homomeric c-ring of between 10-14 subunits forms the central stalk rotor element with the F(1) delta and epsilon subunits. The chain is ATP synthase subunit c from Staphylococcus carnosus (strain TM300).